A 450-amino-acid polypeptide reads, in one-letter code: MKYFGTDGVRGIANETLSPELAFKLGRCGGYVLTQHASNKPARVLVARDTRISGQMLEQALIAGLLSVGIEVFSLGVMTTPGVAYLVRLQDADAGIMISASHNPVQDNGIKFFGSDGYKLSDEKEEEIEALLESDEDTLPRPSAEGLGTLSDYREGALKYTQFLEQTIPDDLEGMHIAVDGANGSTSALVSRLFADLGADFDTMATNPDGLNINKGVGSTHPEALAKFVVEKGAQVGVAFDGDGDRCIAVDENGEIVDGDKIMFICGKYLSERGRLKKDTIVTTVMSNIGLYKAMKENNLNSVQTKVGDRYVVEAMRKDGYNVGGEQSGHVVFLDFNTTGDGMLTALQLLNVIKQTGKKLSELAAEVKTYPQELVNIKVTDKKAALDNEKIKEAIAKVEEKMAGDGRVLVRPSGTEDLLRVMAEAKTQELVHDYVMEIADVVEAEMGVNE.

Ser101 acts as the Phosphoserine intermediate in catalysis. Residues Ser101, Asp241, Asp243, and Asp245 each contribute to the Mg(2+) site. Ser101 carries the post-translational modification Phosphoserine.

This sequence belongs to the phosphohexose mutase family. Mg(2+) is required as a cofactor. Activated by phosphorylation.

The catalysed reaction is alpha-D-glucosamine 1-phosphate = D-glucosamine 6-phosphate. Functionally, catalyzes the conversion of glucosamine-6-phosphate to glucosamine-1-phosphate. This chain is Phosphoglucosamine mutase, found in Ligilactobacillus salivarius (strain UCC118) (Lactobacillus salivarius).